A 503-amino-acid polypeptide reads, in one-letter code: Cytochrome P450 monooxygenase ecdH (503 aa).

The helical transmembrane segment at T8–L24 threads the bilayer. N64, N324, and N413 each carry an N-linked (GlcNAc...) asparagine glycan. C449 contributes to the heme binding site.

Belongs to the cytochrome P450 family. The cofactor is heme.

Its subcellular location is the membrane. It participates in antifungal biosynthesis. Functionally, cytochrome P450 monooxygenase; part of the gene cluster that mediates the biosynthesis of echinocandin B, a fungal lipidated cyclic hexapeptide that acts as an antifungal agent. Linoleoyl-AMP, produced by the fatty-acyl-AMP ligase ecdI, is transferred to the initiation carrier domain (T0) of ecdA. The linoleoyl-S-phosphopantetheinyl-T0 is sequentially extended with L-ornithine, L-threonine, L-proline, L-homotyrosine, L-threonine, and 4R-methyl-L-proline to form the linear hexapeptide. Thereafter, the terminal condensation (C7) performs macrocyclization of the NRPS product and the cyclic scaffold is released from ecdA. All six of the amino acid residues are hydroxylated, including 4R,5R-dihydroxy-L-ornithine, 4R-hydroxyl-L-proline, 3S,4S-dihydroxy-L-homotyrosine, and 3S-hydroxyl-4S-methyl-L-prolin. In the pathway, all the hydroxylation reactions are proposed to occur following completion of the cyclic peptide, so the unhydroxylated precursor produced by ecdA will undergo six rounds of hydroxylation. Five hydroxylase genes (ecdG, ecdH, ecdK, htyE and htyF) are embedded within the echinocandin B (ecd) and L-homotyrosine (hty) clusters. This chain is Cytochrome P450 monooxygenase ecdH, found in Aspergillus rugulosus (Emericella rugulosa).